We begin with the raw amino-acid sequence, 287 residues long: ATP synthase gamma chain (287 aa).

Belongs to the ATPase gamma chain family. As to quaternary structure, F-type ATPases have 2 components, CF(1) - the catalytic core - and CF(0) - the membrane proton channel. CF(1) has five subunits: alpha(3), beta(3), gamma(1), delta(1), epsilon(1). CF(0) has three main subunits: a, b and c.

It localises to the cell inner membrane. Its function is as follows. Produces ATP from ADP in the presence of a proton gradient across the membrane. The gamma chain is believed to be important in regulating ATPase activity and the flow of protons through the CF(0) complex. The protein is ATP synthase gamma chain of Ectopseudomonas mendocina (strain ymp) (Pseudomonas mendocina).